Consider the following 235-residue polypeptide: Leucyl/phenylalanyl-tRNA--protein transferase (235 aa).

It belongs to the L/F-transferase family.

It localises to the cytoplasm. The enzyme catalyses N-terminal L-lysyl-[protein] + L-leucyl-tRNA(Leu) = N-terminal L-leucyl-L-lysyl-[protein] + tRNA(Leu) + H(+). It catalyses the reaction N-terminal L-arginyl-[protein] + L-leucyl-tRNA(Leu) = N-terminal L-leucyl-L-arginyl-[protein] + tRNA(Leu) + H(+). It carries out the reaction L-phenylalanyl-tRNA(Phe) + an N-terminal L-alpha-aminoacyl-[protein] = an N-terminal L-phenylalanyl-L-alpha-aminoacyl-[protein] + tRNA(Phe). In terms of biological role, functions in the N-end rule pathway of protein degradation where it conjugates Leu, Phe and, less efficiently, Met from aminoacyl-tRNAs to the N-termini of proteins containing an N-terminal arginine or lysine. The chain is Leucyl/phenylalanyl-tRNA--protein transferase from Azoarcus sp. (strain BH72).